A 1017-amino-acid polypeptide reads, in one-letter code: Centriole and centriolar satellite protein OFD1 (1017 aa).

A LisH domain is found at leucine 69–lysine 101. 2 coiled-coil regions span residues proline 188–valine 557 and glutamate 626–glutamine 659. The segment at proline 609–glutamine 666 is mediates homooligomerization. 4 disordered regions span residues alanine 657–serine 676, serine 685–glycine 705, glycine 721–aspartate 749, and leucine 769–glycine 801. 8 positions are modified to phosphoserine: serine 664, serine 670, serine 687, serine 722, serine 737, serine 747, serine 791, and serine 823. The segment covering serine 722–proline 740 has biased composition (low complexity). A coiled-coil region spans residues glutamate 895–tyrosine 966. Basic and acidic residues predominate over residues histidine 897–lysine 988. A disordered region spans residues histidine 897–tryptophan 1017.

The protein belongs to the OFD1 family. In terms of assembly, homooligomer. Interacts with LCA5. Interacts with RUVBL1; the interaction is direct and may mediate interaction with the NuA4 histone acetyltransferase complex. Interacts with SDCCAG8; the interaction is direct. Interacts with MAP1LC3B. Interacts with C2CD3; OFD1 may act as a negative regulator of C2CD3. Forms a complex with KIAA0753/OFIP and CEP20/FOR20; the interaction with CEP20 is detected only in the presence of KIAA0753. Interacts with PCM1; this interaction may be mediated by KIAA0753/OFIP. Interacts with TBC1D31; regulates OFD1 activity in cilium assembly. Phosphorylated. Phosphorylation at Ser-737, by the cAMP-dependent protein kinase PKA, triggers ubiquitination and proteasomal degradation of OFD1. Also increases its interaction with TBC1D31 and regulates its function in ciliogenesis. In terms of processing, ubiquitinated by PJA2, upon phosphorylation at Ser-737 by PKA, leads to the proteasomal degradation of OFD1.

Its subcellular location is the cytoplasm. It localises to the cytoskeleton. The protein resides in the microtubule organizing center. It is found in the centrosome. The protein localises to the centriole. Its subcellular location is the centriolar satellite. It localises to the cilium basal body. The protein resides in the nucleus. Component of the centrioles controlling mother and daughter centrioles length. Recruits to the centriole IFT88 and centriole distal appendage-specific proteins including CEP164. Involved in the biogenesis of the cilium, a centriole-associated function. The cilium is a cell surface projection found in many vertebrate cells required to transduce signals important for development and tissue homeostasis. Plays an important role in development by regulating Wnt signaling and the specification of the left-right axis. Only OFD1 localized at the centriolar satellites is removed by autophagy, which is an important step in the ciliogenesis regulation. This chain is Centriole and centriolar satellite protein OFD1 (Ofd1), found in Mus musculus (Mouse).